Here is a 267-residue protein sequence, read N- to C-terminus: Thiazole synthase (267 aa).

Residue K110 is the Schiff-base intermediate with DXP of the active site. Residues G171, 197 to 198 (AG), and 219 to 220 (NT) contribute to the 1-deoxy-D-xylulose 5-phosphate site.

It belongs to the ThiG family. In terms of assembly, homotetramer. Forms heterodimers with either ThiH or ThiS.

The protein resides in the cytoplasm. The catalysed reaction is [ThiS sulfur-carrier protein]-C-terminal-Gly-aminoethanethioate + 2-iminoacetate + 1-deoxy-D-xylulose 5-phosphate = [ThiS sulfur-carrier protein]-C-terminal Gly-Gly + 2-[(2R,5Z)-2-carboxy-4-methylthiazol-5(2H)-ylidene]ethyl phosphate + 2 H2O + H(+). It functions in the pathway cofactor biosynthesis; thiamine diphosphate biosynthesis. Its function is as follows. Catalyzes the rearrangement of 1-deoxy-D-xylulose 5-phosphate (DXP) to produce the thiazole phosphate moiety of thiamine. Sulfur is provided by the thiocarboxylate moiety of the carrier protein ThiS. In vitro, sulfur can be provided by H(2)S. In Maricaulis maris (strain MCS10) (Caulobacter maris), this protein is Thiazole synthase.